We begin with the raw amino-acid sequence, 133 residues long: Bacteriohemerythrin (133 aa).

Positions 19, 56, 60, 75, 79, 115, and 120 each coordinate Fe cation.

The protein belongs to the hemerythrin family. As to quaternary structure, monomer.

Oxygen-binding protein. May be involved in a storage mechanism or for delivery to oxygen-requiring enzymes. The oxygen-binding site contains two iron atoms. This Campylobacter jejuni subsp. jejuni serotype O:23/36 (strain 81-176) protein is Bacteriohemerythrin.